We begin with the raw amino-acid sequence, 467 residues long: Neutrophil collagenase (467 aa).

Positions 1 to 20 (MFSLKTLPFLLLLHVQISKA) are cleaved as a signal peptide. A propeptide spans 21–100 (FPVSSKEKNT…CGVPDSGGFM (80 aa)) (activation peptide). Residues Asn54 and Asn73 are each glycosylated (N-linked (GlcNAc...) asparagine). A Cysteine switch motif is present at residues 89-96 (PRCGVPDS). Cys91 lines the Zn(2+) pocket. An N-linked (GlcNAc...) asparagine glycan is attached at Asn112. Asp157 contributes to the Ca(2+) binding site. Zn(2+)-binding residues include His167 and Asp169. Residues Asp174, Gly175, Asn177, and Ile179 each contribute to the Ca(2+) site. Residue His182 participates in Zn(2+) binding. Ca(2+)-binding residues include Gly189, Gly191, and Asp193. His195 lines the Zn(2+) pocket. 2 residues coordinate Ca(2+): Asp197 and Glu200. The N-linked (GlcNAc...) asparagine glycan is linked to Asn204. His217 lines the Zn(2+) pocket. Residue Glu218 is part of the active site. The Zn(2+) site is built by His221 and His227. Residue Asn246 is glycosylated (N-linked (GlcNAc...) asparagine). 4 Hemopexin repeats span residues 276–325 (PKPC…WPSL), 326–372 (PTGI…GFPS), 374–420 (VQAI…FPGI), and 421–464 (ESKV…WLNC). Cys279 and Cys464 form a disulfide bridge. Residue Asp286 coordinates Ca(2+). Residues Asp378 and Asp425 each contribute to the Ca(2+) site.

Belongs to the peptidase M10A family. Ca(2+) is required as a cofactor. It depends on Zn(2+) as a cofactor. As to expression, neutrophils.

It is found in the cytoplasmic granule. The protein localises to the secreted. It localises to the extracellular space. The protein resides in the extracellular matrix. The catalysed reaction is Cleavage of interstitial collagens in the triple helical domain. Unlike EC 3.4.24.7, this enzyme cleaves type III collagen more slowly than type I.. Cannot be activated without removal of the activation peptide. Can degrade fibrillar type I, II, and III collagens. This is Neutrophil collagenase (MMP8) from Homo sapiens (Human).